A 316-amino-acid chain; its full sequence is Methionyl-tRNA formyltransferase (316 aa).

Residue 113–116 (SLLP) participates in (6S)-5,6,7,8-tetrahydrofolate binding.

This sequence belongs to the Fmt family.

The enzyme catalyses L-methionyl-tRNA(fMet) + (6R)-10-formyltetrahydrofolate = N-formyl-L-methionyl-tRNA(fMet) + (6S)-5,6,7,8-tetrahydrofolate + H(+). In terms of biological role, attaches a formyl group to the free amino group of methionyl-tRNA(fMet). The formyl group appears to play a dual role in the initiator identity of N-formylmethionyl-tRNA by promoting its recognition by IF2 and preventing the misappropriation of this tRNA by the elongation apparatus. This is Methionyl-tRNA formyltransferase from Proteus mirabilis (strain HI4320).